Here is a 302-residue protein sequence, read N- to C-terminus: MTKDVLATFPAIEIKKNESLSHYTNTKTGGPADYVAFPKSISETKALITFANEQNLPLTVIGNASNLIVKDGGIRGLTIILTRMKQIHASGTKVVAEAGAAIIATTKVACGASLTGLEFAAGIPGSVGGAIFMNAGAYGGEMSEVVETVTVLTPAGQLKTLDHDELDFGYRHSTIQDYDDIVVSVTFGLKPGNQTKIQARMDELNTLRAAKQPLEWPSCGSVFKRPTGYFTGKLIHDAGLQGHRIGGAEVSKKHAGFIINVDHATATDYMDMIHYVQKVVFERFGVHLQTEVRIIGEDVVQG.

Residues Lys-27–Gly-192 form the FAD-binding PCMH-type domain. Arg-171 is a catalytic residue. Catalysis depends on Ser-221, which acts as the Proton donor. Glu-291 is an active-site residue.

The protein belongs to the MurB family. FAD serves as cofactor.

It localises to the cytoplasm. It catalyses the reaction UDP-N-acetyl-alpha-D-muramate + NADP(+) = UDP-N-acetyl-3-O-(1-carboxyvinyl)-alpha-D-glucosamine + NADPH + H(+). The protein operates within cell wall biogenesis; peptidoglycan biosynthesis. Functionally, cell wall formation. The polypeptide is UDP-N-acetylenolpyruvoylglucosamine reductase (Lactiplantibacillus plantarum (strain ATCC BAA-793 / NCIMB 8826 / WCFS1) (Lactobacillus plantarum)).